Reading from the N-terminus, the 686-residue chain is DNA ligase (686 aa).

NAD(+) contacts are provided by residues 45–49, 94–95, and Glu-127; these read DNEYD and SL. Lys-129 acts as the N6-AMP-lysine intermediate in catalysis. Residues Arg-150, Glu-187, Lys-302, and Lys-326 each coordinate NAD(+). Residues Cys-420, Cys-423, Cys-438, and Cys-444 each contribute to the Zn(2+) site. The region spanning 605-686 is the BRCT domain; it reads LDNLPLEGQT…DEFLKMIGAS (82 aa).

Belongs to the NAD-dependent DNA ligase family. LigA subfamily. It depends on Mg(2+) as a cofactor. The cofactor is Mn(2+).

The catalysed reaction is NAD(+) + (deoxyribonucleotide)n-3'-hydroxyl + 5'-phospho-(deoxyribonucleotide)m = (deoxyribonucleotide)n+m + AMP + beta-nicotinamide D-nucleotide.. Its function is as follows. DNA ligase that catalyzes the formation of phosphodiester linkages between 5'-phosphoryl and 3'-hydroxyl groups in double-stranded DNA using NAD as a coenzyme and as the energy source for the reaction. It is essential for DNA replication and repair of damaged DNA. The protein is DNA ligase of Psychrobacter sp. (strain PRwf-1).